The following is a 684-amino-acid chain: MSAKDFLVELGTEELPPKALKSLGDAFLAGIEKGLKAAGLNYAASRVYAAPRRLAVLVEQLEEQQADRSMNLDGPPIQAAFDADGNPTQAALGFARKCGVDIAEIDRSGAKLRFAQHIPGQPAVNLLPTIVQDSLNDLPIPKRMRWAARRDEFVRPTQWLVMLFGDAVVDCEILAQKAGRVSRGHRFHANREVRISSPANYAEDLRSAYVLADFAERREIISRRVDELAAAEQGTAIVPPALLDEVTALVEWPVPLVCSFEERFLEVPQEALISTMQDNQKYFCLLDAGGKLLPRFITVANIESKDPAQIVSGNEKVVRPRLTDAEFFFKQDKKQKLEGFNQRLANVVFQAQLGSVFDKAQRVSALAGFIAREVGGDEARAARAGLLSKCDLATEMVGEFPEMQGIAGYYYALNDGEPQDVALALNEQYMPRGAGAELPSTLTGAAVAVADKLDTLVGIFGIGMLPTGSKDPYALRRAALGVLRILIEKGLDLDLAAAVDFAVAQYAGKVKSDGLAAQVLEFIFDRLRARYEDEGIEVAVYQAVRAVNPTSPLDFDQRVQAVQAFRKLPQAEALAAANKRVSNLLSKAEGGVAAQVEAHYFDNPSEFALHAAIQQADQAVQPLAAARQYNEALAKLASLREPVDAFFEAVLVNAEDARVRANRYALLARLRGLFLGVADISVLG.

It belongs to the class-II aminoacyl-tRNA synthetase family. In terms of assembly, tetramer of two alpha and two beta subunits.

Its subcellular location is the cytoplasm. The catalysed reaction is tRNA(Gly) + glycine + ATP = glycyl-tRNA(Gly) + AMP + diphosphate. The polypeptide is Glycine--tRNA ligase beta subunit (Ectopseudomonas mendocina (strain ymp) (Pseudomonas mendocina)).